We begin with the raw amino-acid sequence, 1179 residues long: Tubulin glycylase 3B (1179 aa).

Over residues 177 to 199 (NKGQTNNSNRENGGNFHSEQSPK) the composition is skewed to polar residues. 4 disordered regions span residues 177–208 (NKGQTNNSNRENGGNFHSEQSPKSAAGSVVSG), 250–278 (QQPQPLSQQHSNQSSQSSNPQSQSPLPLS), 592–625 (KVLSNTKSKDEEESSDDDETPVKSKSNNQNAVQQ), and 853–890 (QKQHMNKRKNSHRISVNHNHNDPIEEESAQSSTSLKQD). Residues 592-601 (KVLSNTKSKD) are compositionally biased toward basic and acidic residues. Polar residues-rich tracts occupy residues 614–625 (KSKSNNQNAVQQ) and 881–890 (AQSSTSLKQD). A TTL domain is found at 790–1152 (FIDFYETVDF…SMAKKGTKKN (363 aa)). ATP-binding positions include 965 to 968 (QKYI), Lys978, and Asp980.

Its subcellular location is the cell projection. It localises to the cilium. It is found in the cytoplasm. The protein localises to the cytoskeleton. The protein resides in the cilium axoneme. Functionally, polyglycylase which modifies tubulin, generating side chains of glycine on the gamma-carboxyl groups of specific glutamate residues within the C-terminal tail of tubulin. Polyglycylates tubulin, with a preference for alpha-tubulin toward beta-tubulin. In Tetrahymena thermophila (strain SB210), this protein is Tubulin glycylase 3B (TTLL3B).